The chain runs to 274 residues: Large ribosomal subunit protein uL2c (274 aa).

Disordered regions lie at residues Met1 to Val22 and Pro225 to Gly254.

It belongs to the universal ribosomal protein uL2 family. As to quaternary structure, part of the 50S ribosomal subunit.

The protein resides in the plastid. The protein localises to the chloroplast. This chain is Large ribosomal subunit protein uL2c (rpl2), found in Sinapis alba (White mustard).